A 259-amino-acid chain; its full sequence is Global transcriptional regulator CodY (259 aa).

The GAF domain stretch occupies residues 1 to 155 (MDLLSKTRRI…GATVVGMEIL (155 aa)). The segment at residues 203–222 (ASKIADRVGITRSVIVNALR) is a DNA-binding region (H-T-H motif).

Belongs to the CodY family.

It localises to the cytoplasm. In terms of biological role, DNA-binding global transcriptional regulator which is involved in the adaptive response to starvation and acts by directly or indirectly controlling the expression of numerous genes in response to nutrient availability. During rapid exponential growth, CodY is highly active and represses genes whose products allow adaptation to nutrient depletion. In Brevibacillus brevis (strain 47 / JCM 6285 / NBRC 100599), this protein is Global transcriptional regulator CodY.